The primary structure comprises 198 residues: ATP-dependent Clp protease proteolytic subunit (198 aa).

The active-site Nucleophile is the S98. The active site involves H123.

The protein belongs to the peptidase S14 family. In terms of assembly, fourteen ClpP subunits assemble into 2 heptameric rings which stack back to back to give a disk-like structure with a central cavity, resembling the structure of eukaryotic proteasomes.

The protein localises to the cytoplasm. It carries out the reaction Hydrolysis of proteins to small peptides in the presence of ATP and magnesium. alpha-casein is the usual test substrate. In the absence of ATP, only oligopeptides shorter than five residues are hydrolyzed (such as succinyl-Leu-Tyr-|-NHMec, and Leu-Tyr-Leu-|-Tyr-Trp, in which cleavage of the -Tyr-|-Leu- and -Tyr-|-Trp bonds also occurs).. Cleaves peptides in various proteins in a process that requires ATP hydrolysis. Has a chymotrypsin-like activity. Plays a major role in the degradation of misfolded proteins. The protein is ATP-dependent Clp protease proteolytic subunit of Ehrlichia ruminantium (strain Welgevonden).